The primary structure comprises 285 residues: HTH-type transcriptional regulator MurR (285 aa).

Positions 1 to 77 (MLYLTKISNA…MALIGEYSAS (77 aa)) constitute an HTH rpiR-type domain. The segment at residues 37-56 (SRQMAKQLGISQSSIVKFAQ) is a DNA-binding region (H-T-H motif). Residues 128 to 279 (IIEVISKAPF…SLKMIQRSSE (152 aa)) enclose the SIS domain.

As to quaternary structure, homotetramer.

Its pathway is amino-sugar metabolism; N-acetylmuramate degradation [regulation]. Represses the expression of the murPQ operon involved in the uptake and degradation of N-acetylmuramic acid (MurNAc). Binds to two adjacent inverted repeats within the operator region. MurNAc 6-phosphate, the substrate of MurQ, is the specific inducer that weakens binding of MurR to the operator. The protein is HTH-type transcriptional regulator MurR of Shigella boydii serotype 4 (strain Sb227).